We begin with the raw amino-acid sequence, 534 residues long: MASFVDRVVLHVSGGSGGHGCVSVKREKFKPLGGPDGGNGGDGGNVILRVSHQTTTLLDYHHAPHRHASNGGQGMGDWRGGKQGETLILPVPDGTVVKTKDGEVLADLVGEGTEYVAAAGGQGGLGNSSLSSQKRRAPGFALLGVDGEASDIVLELKSIADIALVGFPSAGKSSLIAAMSAARPKIADYPFTTLIPNLGVVEAGEVRFTIADVPGLIEGASEGKGLGHHFLRHVERCTALVHVLDTATLESDRDPLSDLAIIEAELEKYAVDMSYAGVDGEVIPLNERPKLVALNKIDTPDGKDMAEFVRAELEGRGYRVFEVSASSHEGLRQLSFAMAELVTAARARATVVTAKITPPVLRPRAVNRKEFTIRPEERNLEPLFRVLGAKPVRWVKQTDFTNEEAIGYLAERLNKLGVEDGLFKKGAKPGDTVVIGEDGENAVVFDWEPTMMAGAELLSGPRGTDPRFTDLGDRPTRSQKREEYQERRDAKSAARAELESERKAGIWTESVSARRDREAHESREAASTDDGDAL.

The region spanning 2–159 (ASFVDRVVLH…SDIVLELKSI (158 aa)) is the Obg domain. Positions 63 to 82 (APHRHASNGGQGMGDWRGGK) are disordered. The segment covering 71-82 (GGQGMGDWRGGK) has biased composition (gly residues). Positions 160 to 343 (ADIALVGFPS…LSFAMAELVT (184 aa)) constitute an OBG-type G domain. GTP is bound by residues 166-173 (GFPSAGKS), 191-195 (FTTLI), 212-215 (DVPG), 295-298 (NKID), and 324-326 (SAS). Ser-173 and Thr-193 together coordinate Mg(2+). The OCT domain occupies 363–449 (PRAVNRKEFT…ENAVVFDWEP (87 aa)). The tract at residues 456-534 (ELLSGPRGTD…AASTDDGDAL (79 aa)) is disordered. 2 stretches are compositionally biased toward basic and acidic residues: residues 464–504 (TDPR…ERKA) and 512–526 (SARRDREAHESREAA).

It belongs to the TRAFAC class OBG-HflX-like GTPase superfamily. OBG GTPase family. In terms of assembly, monomer. Mg(2+) is required as a cofactor.

It is found in the cytoplasm. An essential GTPase which binds GTP, GDP and possibly (p)ppGpp with moderate affinity, with high nucleotide exchange rates and a fairly low GTP hydrolysis rate. Plays a role in control of the cell cycle, stress response, ribosome biogenesis and in those bacteria that undergo differentiation, in morphogenesis control. This is GTPase Obg from Renibacterium salmoninarum (strain ATCC 33209 / DSM 20767 / JCM 11484 / NBRC 15589 / NCIMB 2235).